The following is a 232-amino-acid chain: Large ribosomal subunit protein uL1 (232 aa).

It belongs to the universal ribosomal protein uL1 family. In terms of assembly, part of the 50S ribosomal subunit.

In terms of biological role, binds directly to 23S rRNA. The L1 stalk is quite mobile in the ribosome, and is involved in E site tRNA release. Protein L1 is also a translational repressor protein, it controls the translation of the L11 operon by binding to its mRNA. This Methylobacterium radiotolerans (strain ATCC 27329 / DSM 1819 / JCM 2831 / NBRC 15690 / NCIMB 10815 / 0-1) protein is Large ribosomal subunit protein uL1.